The sequence spans 858 residues: Protein translocase subunit SecA (858 aa).

ATP is bound by residues Gln85, 103–107, and Asp511; that span reads GEGKT. 4 residues coordinate Zn(2+): Cys840, Cys842, Cys851, and Cys852.

This sequence belongs to the SecA family. Monomer and homodimer. Part of the essential Sec protein translocation apparatus which comprises SecA, SecYEG and auxiliary proteins SecDF. Other proteins may also be involved. Requires Zn(2+) as cofactor.

Its subcellular location is the cell membrane. It localises to the cytoplasm. It catalyses the reaction ATP + H2O + cellular proteinSide 1 = ADP + phosphate + cellular proteinSide 2.. Its function is as follows. Part of the Sec protein translocase complex. Interacts with the SecYEG preprotein conducting channel. Has a central role in coupling the hydrolysis of ATP to the transfer of proteins into and across the cell membrane, serving as an ATP-driven molecular motor driving the stepwise translocation of polypeptide chains across the membrane. The chain is Protein translocase subunit SecA from Lachnoclostridium phytofermentans (strain ATCC 700394 / DSM 18823 / ISDg) (Clostridium phytofermentans).